Consider the following 231-residue polypeptide: MAKVSKRLKVLRSSVEANKLYAIDEAIALVKKAATAKFDESVDVSFNLGVDSRKSDQVIRGSVVLPKGTGKTTRVAVFTQGVNAEAAKEAGADVVGFEDLAAEIKAGNLNFDVVIASPDAMRIVGQLGTILGPRGLMPNPKIGTVTPNVAEAVKNAKAGQVQYRTDKAGIVHATIGRASFAEADLKENFDALLDAIVKAKPAAAKGQYLKKVAVSSTMGLGVRVDTSSVNN.

This sequence belongs to the universal ribosomal protein uL1 family. As to quaternary structure, part of the 50S ribosomal subunit.

Binds directly to 23S rRNA. The L1 stalk is quite mobile in the ribosome, and is involved in E site tRNA release. Its function is as follows. Protein L1 is also a translational repressor protein, it controls the translation of the L11 operon by binding to its mRNA. The chain is Large ribosomal subunit protein uL1 from Neisseria gonorrhoeae (strain ATCC 700825 / FA 1090).